Consider the following 458-residue polypeptide: Monomethylamine methyltransferase MtmB2 (458 aa).

Residue Pyl-202 is a non-standard amino acid, pyrrolysine.

This sequence belongs to the monomethylamine methyltransferase family. In terms of assembly, can form a complex with MtmC.

It catalyses the reaction Co(I)-[methylamine-specific corrinoid protein] + methylamine + H(+) = methyl-Co(III)-[methylamine-specific corrinoid protein] + NH4(+). It functions in the pathway one-carbon metabolism; methanogenesis from methylamine. Catalyzes the transfer of the methyl group from monomethylamine to the corrinoid cofactor of MtmC. The sequence is that of Monomethylamine methyltransferase MtmB2 (mtmB2) from Methanosarcina acetivorans (strain ATCC 35395 / DSM 2834 / JCM 12185 / C2A).